The chain runs to 183 residues: Senescence-associated protein DIN1 (183 aa).

The Rhodanese domain occupies A83 to E183.

In terms of biological role, is thought to act during the early stages of leaf senescence. The polypeptide is Senescence-associated protein DIN1 (DIN1) (Raphanus sativus (Radish)).